Reading from the N-terminus, the 152-residue chain is Neuropeptide W (152 aa).

The first 32 residues, 1 to 32 (MGARGPGPGATARRRLLALLLLLLLLPLPARA), serve as a signal peptide directing secretion. Positions 65–152 (ALRPAAGPLA…LGASSWTSAE (88 aa)) are excised as a propeptide. Disordered regions lie at residues 79 to 108 (GQDVPPRGPSARNALSPGPAPRDAPLLPPG) and 122 to 152 (SGIPVSAPRSPRARGSEPQPELGASSWTSAE). The span at 96–106 (GPAPRDAPLLP) shows a compositional bias: pro residues.

This sequence belongs to the neuropeptide B/W family.

Its subcellular location is the secreted. In terms of biological role, plays a regulatory role in the organization of neuroendocrine signals accessing the anterior pituitary gland. Stimulates water drinking and food intake. May play a role in the hypothalamic response to stress. The protein is Neuropeptide W (NPW) of Sus scrofa (Pig).